A 721-amino-acid chain; its full sequence is Catalase-peroxidase (721 aa).

The tryptophyl-tyrosyl-methioninium (Trp-Tyr) (with M-238) cross-link spans Trp-89 to Tyr-212. His-90 (proton acceptor) is an active-site residue. The tryptophyl-tyrosyl-methioninium (Tyr-Met) (with W-89) cross-link spans Tyr-212–Met-238. His-253 lines the heme b pocket.

It belongs to the peroxidase family. Peroxidase/catalase subfamily. Homodimer or homotetramer. Heme b serves as cofactor. Formation of the three residue Trp-Tyr-Met cross-link is important for the catalase, but not the peroxidase activity of the enzyme.

The enzyme catalyses H2O2 + AH2 = A + 2 H2O. The catalysed reaction is 2 H2O2 = O2 + 2 H2O. Bifunctional enzyme with both catalase and broad-spectrum peroxidase activity. The polypeptide is Catalase-peroxidase (Shewanella baltica (strain OS195)).